The sequence spans 360 residues: DNA replication and repair protein RecF (360 aa).

Residue 30 to 37 (GQNGSGKT) participates in ATP binding.

It belongs to the RecF family.

Its subcellular location is the cytoplasm. The RecF protein is involved in DNA metabolism; it is required for DNA replication and normal SOS inducibility. RecF binds preferentially to single-stranded, linear DNA. It also seems to bind ATP. In Shewanella loihica (strain ATCC BAA-1088 / PV-4), this protein is DNA replication and repair protein RecF.